The sequence spans 1824 residues: MSLRGPMKHSHLRQVSAASLETLSTTRSLALSQTDGQSDKPSTPDERTIRLSSTGLDRRQCSLWVHDETFSKEEILFNQAAFTDMGVEVGDVIEILPARYPGDGTHSAKTDFGSRSLRDSHVESSSTLHSDSMSKFKTPLQSRCLFVVKPLPQDIKTRNPKLELSVTTSIANIFGFKNRTTVHISIVDRAQCAASHVDISFRDQYMVRSDMWRLVMSELAERIVYKGQKIVFTGSIKATVKNIFIRGKKVLSGFFSPQTIPVFRSESAKYVLFIQMSREMWDFDSEGTGDILFSRVINGFLPELFKRWVNSDARHLVTIVLFTRVEYDASAIASSTFSSENLTSMFGPNHVPTRDFYRVVVNDMASGHWTTILDELKKDFRTFLRDVSILNVHNADTPTFNATGASKSQPATIAGRPSTALRGNILEAIHLASSHLAFDHIDRDMVHTGTSIIVITPGSGVFEVSYESLASTTEALTNRGIAIDLVCLSPMPLHSVPLFKYREPAHRPTTAAFGDIQHGGYSPEMRHSFASISSKTPHLSPKSALLDSFTGMSSKSQWSGRSNEWNYGIPHWLDISYWNPETYRESRRILKKDPNAPIPFTVTKQSKVFVPRVRMYEIQMMGVMESEQSNISIPYLSEGPNISRATSSTLGSSPGSLVPPKATFRRNSPFRHQLSDSLRPEPFLHNMASSKDAMLTIPKKTPKTVLSWMDNYDENVFQPFRKRRHRRKPSKIKRPSEPEVKASNAHERISARSISRLRENESTRSASRQIDIPLPAPKSPVSTKSASPKKPALKSSSKTKLPRISRTISFALRGLSSTPPRAQASTEVNVEHARGLPTSNSRKLSGVLADNRSVDSLSASDSASTVIDLAPSPETPQKPIKNTAITPSRPISIKVPPKQPLQDTEQQGRPAIPESVSTTTTEIALGDDTRLTAQPRRHGPKFEVNLSSGSRNGSSKSPQSKALAPWVRSVNPCNTPREVLRDTSWFGRWQHAYPRPPHVAVVKWKSLKSPAVLPLTTEEFPTPSELASDYLQTPYRVFPNEDSEGIEAPKTRGVLLREMISLRLSHGFQIVVGKNVVEASAQYTLQSPNVFDTHALERAGATVFLSKGNSIHRLICVEGAEIEVTRYTHRTSSLLASDQKRKFTLYSPAMRTILSPEYVVKDIKLDSTYEEYNWNYADNYVAGHRDYLFNPAQQLHFWRVRYVLIPMRLHFKSRRLHGFNEDNEEEIHLLGINQLTHIWQRHKYIPPEEKRFESSNKKRDQNPLNIMYQTRNPSEVIAAELDRIILVDPGLDSSPAQLLPESELLERSGISLSSLAQIIQGEKGVRMMDRRWHWRLHYNCFIGFELTTWLLQNFRDIDSREEAVEFGNELMKHGLFQHVEKRHNFRDGNYFYQISSEYRVSRPESRGSWFPQIRPDKSVPSTPVGEASKGSPISGHTRSDSTEDTQSQTPSTPSKLKNKASITLSKTMKYDVDPRKRSNRPEVIDLHYDRLHNPENCFHIELSWMNTTPKLIEDTVLSWASTAEKFGLKLVQVPIAEACAIDKTQPFRKPYCVQLKAPPPKGPIPLQCNSESFSQPVTLDHQYFHKALLRKFDFVLDFEARSSYPADVEVSYSWGMPDYQYPQYIHRSGSVLAQITGEGDFLLLANRLVSTRSAASRDMPRHERLDRPDQYRARAGTYDPVDRISPRLSPMARPVHEVHSPLSPQGHASIDSANLYRAPEHILTGFADFCNDPARLEQFYSEAQVRATSTKVGPAPTTLTDASIPSLELPASVVSHHISPPPGLPSRSSHNIAAPLSEIRRSRDDSNMSRGSPRSGSLRPLSLT.

The segment covering 28–41 has biased composition (polar residues); sequence SLALSQTDGQSDKP. Disordered stretches follow at residues 28 to 48, 644 to 682, and 719 to 964; these read SLAL…DERT, RATS…RPEP, and PFRK…KALA. Over residues 646–659 the composition is skewed to low complexity; the sequence is TSSTLGSSPGSLVP. Residues 720-733 show a composition bias toward basic residues; that stretch reads FRKRRHRRKPSKIK. Residues 734–762 are compositionally biased toward basic and acidic residues; that stretch reads RPSEPEVKASNAHERISARSISRLRENES. Residues 779-799 show a composition bias toward low complexity; that stretch reads SPVSTKSASPKKPALKSSSKT. A compositionally biased stretch (polar residues) spans 815 to 828; sequence LSSTPPRAQASTEV. Composition is skewed to low complexity over residues 854 to 864 and 947 to 961; these read VDSLSASDSAS and SSGS…PQSK. The DEP domain occupies 1321–1396; sequence GEKGVRMMDR…DGNYFYQISS (76 aa). 2 disordered regions span residues 1406-1460 and 1797-1824; these read RGSW…KNKA and SEIR…LSLT. Over residues 1444-1460 the composition is skewed to polar residues; the sequence is DTQSQTPSTPSKLKNKA. Residues 1798 to 1807 are compositionally biased toward basic and acidic residues; sequence EIRRSRDDSN. The span at 1809–1824 shows a compositional bias: low complexity; the sequence is SRGSPRSGSLRPLSLT.

It belongs to the IML1 family.

The protein resides in the vacuole membrane. The polypeptide is Vacuolar membrane-associated protein iml1 (iml1) (Aspergillus oryzae (strain ATCC 42149 / RIB 40) (Yellow koji mold)).